Consider the following 265-residue polypeptide: 3-methyl-2-oxobutanoate hydroxymethyltransferase (265 aa).

Mg(2+) is bound by residues Asp-45 and Asp-84. Residues 45-46 (DS), Asp-84, and Lys-112 contribute to the 3-methyl-2-oxobutanoate site. Glu-114 serves as a coordination point for Mg(2+). Glu-182 acts as the Proton acceptor in catalysis.

This sequence belongs to the PanB family. As to quaternary structure, homodecamer; pentamer of dimers. Mg(2+) serves as cofactor.

It is found in the cytoplasm. The catalysed reaction is 3-methyl-2-oxobutanoate + (6R)-5,10-methylene-5,6,7,8-tetrahydrofolate + H2O = 2-dehydropantoate + (6S)-5,6,7,8-tetrahydrofolate. It participates in cofactor biosynthesis; (R)-pantothenate biosynthesis; (R)-pantoate from 3-methyl-2-oxobutanoate: step 1/2. In terms of biological role, catalyzes the reversible reaction in which hydroxymethyl group from 5,10-methylenetetrahydrofolate is transferred onto alpha-ketoisovalerate to form ketopantoate. The polypeptide is 3-methyl-2-oxobutanoate hydroxymethyltransferase (Baumannia cicadellinicola subsp. Homalodisca coagulata).